The chain runs to 137 residues: Universal stress protein HP_0031 (137 aa).

Belongs to the universal stress protein A family.

The protein is Universal stress protein HP_0031 of Helicobacter pylori (strain ATCC 700392 / 26695) (Campylobacter pylori).